The primary structure comprises 236 residues: 2-C-methyl-D-erythritol 4-phosphate cytidylyltransferase (236 aa).

Belongs to the IspD/TarI cytidylyltransferase family. IspD subfamily.

It catalyses the reaction 2-C-methyl-D-erythritol 4-phosphate + CTP + H(+) = 4-CDP-2-C-methyl-D-erythritol + diphosphate. Its pathway is isoprenoid biosynthesis; isopentenyl diphosphate biosynthesis via DXP pathway; isopentenyl diphosphate from 1-deoxy-D-xylulose 5-phosphate: step 2/6. Functionally, catalyzes the formation of 4-diphosphocytidyl-2-C-methyl-D-erythritol from CTP and 2-C-methyl-D-erythritol 4-phosphate (MEP). The chain is 2-C-methyl-D-erythritol 4-phosphate cytidylyltransferase from Pseudomonas savastanoi pv. phaseolicola (strain 1448A / Race 6) (Pseudomonas syringae pv. phaseolicola (strain 1448A / Race 6)).